A 115-amino-acid polypeptide reads, in one-letter code: NADH-ubiquinone oxidoreductase chain 3 (115 aa).

Transmembrane regions (helical) follow at residues 3-23 (VMLA…IAFW), 55-75 (FFLV…LLPL), and 84-104 (LPTM…SLAY).

It belongs to the complex I subunit 3 family. In terms of assembly, core subunit of respiratory chain NADH dehydrogenase (Complex I) which is composed of 45 different subunits. Interacts with TMEM186. Interacts with TMEM242.

Its subcellular location is the mitochondrion inner membrane. The catalysed reaction is a ubiquinone + NADH + 5 H(+)(in) = a ubiquinol + NAD(+) + 4 H(+)(out). In terms of biological role, core subunit of the mitochondrial membrane respiratory chain NADH dehydrogenase (Complex I) which catalyzes electron transfer from NADH through the respiratory chain, using ubiquinone as an electron acceptor. Essential for the catalytic activity of complex I. The polypeptide is NADH-ubiquinone oxidoreductase chain 3 (Felis catus (Cat)).